A 232-amino-acid polypeptide reads, in one-letter code: Enolase-phosphatase E1 (232 aa).

It belongs to the HAD-like hydrolase superfamily. MasA/MtnC family. In terms of assembly, monomer. The cofactor is Mg(2+).

The enzyme catalyses 5-methylsulfanyl-2,3-dioxopentyl phosphate + H2O = 1,2-dihydroxy-5-(methylsulfanyl)pent-1-en-3-one + phosphate. It participates in amino-acid biosynthesis; L-methionine biosynthesis via salvage pathway; L-methionine from S-methyl-5-thio-alpha-D-ribose 1-phosphate: step 3/6. It functions in the pathway amino-acid biosynthesis; L-methionine biosynthesis via salvage pathway; L-methionine from S-methyl-5-thio-alpha-D-ribose 1-phosphate: step 4/6. In terms of biological role, bifunctional enzyme that catalyzes the enolization of 2,3-diketo-5-methylthiopentyl-1-phosphate (DK-MTP-1-P) into the intermediate 2-hydroxy-3-keto-5-methylthiopentenyl-1-phosphate (HK-MTPenyl-1-P), which is then dephosphorylated to form the acireductone 1,2-dihydroxy-3-keto-5-methylthiopentene (DHK-MTPene). The chain is Enolase-phosphatase E1 from Xylella fastidiosa (strain 9a5c).